We begin with the raw amino-acid sequence, 858 residues long: Receptor-like protein kinase ANXUR2 (858 aa).

The N-terminal stretch at 1 to 27 is a signal peptide; the sequence is MNEKLRILFSFLCFFYVLLVSPSQSNG. At 28 to 431 the chain is on the extracellular side; the sequence is QDISLSCGAS…VKKDFQGDKR (404 aa). N-linked (GlcNAc...) asparagine glycosylation is found at Asn133, Asn293, Asn303, and Asn331. A helical membrane pass occupies residues 432–452; sequence ITAFVIGSAGGVAAVLFCALC. The Cytoplasmic segment spans residues 453–858; that stretch reads FTMYQRKRKF…FSQIVNPKGR (406 aa). The region spanning 521–794 is the Protein kinase domain; the sequence is FDESNVIGVG…GDVLWNLEFA (274 aa). ATP-binding positions include 527 to 535 and Lys549; that span reads IGVGGFGKV. The active-site Proton acceptor is the Asp645. Positions 800-858 are disordered; sequence TADGSRHRTPSNGGGSVDLGGGGGGVTVNISAGESDLGDDLSSEENSGIFSQIVNPKGR. Gly residues predominate over residues 811-825; the sequence is NGGGSVDLGGGGGGV. Residues 843 to 858 are compositionally biased toward polar residues; sequence EENSGIFSQIVNPKGR.

Belongs to the protein kinase superfamily. Ser/Thr protein kinase family. As to expression, expressed in pollen, but not in pistils or seedlings.

It localises to the cell membrane. It carries out the reaction L-seryl-[protein] + ATP = O-phospho-L-seryl-[protein] + ADP + H(+). The enzyme catalyses L-threonyl-[protein] + ATP = O-phospho-L-threonyl-[protein] + ADP + H(+). Receptor-like protein kinase that controls pollen tube behavior by directing rupture at proper timing to release the sperm cell. This chain is Receptor-like protein kinase ANXUR2 (ANX2), found in Arabidopsis thaliana (Mouse-ear cress).